Reading from the N-terminus, the 183-residue chain is Segregation and condensation protein B (183 aa).

It belongs to the ScpB family. In terms of assembly, homodimer. Homodimerization may be required to stabilize the binding of ScpA to the Smc head domains. Component of a cohesin-like complex composed of ScpA, ScpB and the Smc homodimer, in which ScpA and ScpB bind to the head domain of Smc. The presence of the three proteins is required for the association of the complex with DNA.

The protein resides in the cytoplasm. In terms of biological role, participates in chromosomal partition during cell division. May act via the formation of a condensin-like complex containing Smc and ScpA that pull DNA away from mid-cell into both cell halves. This Streptococcus pyogenes serotype M12 (strain MGAS2096) protein is Segregation and condensation protein B.